A 219-amino-acid polypeptide reads, in one-letter code: uncharacterized protein (219 aa).

This is an uncharacterized protein from Escherichia coli (strain K12).